Consider the following 354-residue polypeptide: Guanine nucleotide-binding protein G(t) subunit alpha-3 (354 aa).

Residues 1-27 (MGSGISSESKESAKRSKELEKKLQEDA) are disordered. Residue Gly2 is the site of N-myristoyl glycine attachment. The span at 8-27 (ESKESAKRSKELEKKLQEDA) shows a compositional bias: basic and acidic residues. The G-alpha domain occupies 32–354 (RTVKLLLLGA…KENLKDCGLF (323 aa)). The segment at 35–48 (KLLLLGAGESGKST) is G1 motif. GTP is bound by residues 40–47 (GAGESGKS), 175–181 (LHSRVKT), 200–204 (DVGGQ), 269–272 (NKKD), and Ala326. Residues Ser47 and Thr181 each coordinate Mg(2+). Residues 173-181 (DVLHSRVKT) are G2 motif. A G3 motif region spans residues 196 to 205 (FRMFDVGGQR). A G4 motif region spans residues 265–272 (VLFLNKKD). A G5 motif region spans residues 324–329 (TCATDT).

It belongs to the G-alpha family. G(i/o/t/z) subfamily. In terms of assembly, g proteins are composed of 3 units; alpha, beta and gamma, respectively GNAT3, GNB1 and GNG13 for Gustducin heterotrimer for bitter taste transduction. The alpha chain contains the guanine nucleotide binding site. Component of the TAS2R14-GNAT3 complex, consisting of TAS2R14, GNAT3, GNB1 and GNG2; within the complex interacts with TAS2R14; this complex plays a role in the perception of bitterness. Gustducin heterotrimer may also be composed of GNAT3, GNB3 and GNG13. Potential N-myristoylation may anchor alpha-subunit to the inner surface of plasma membrane. In terms of tissue distribution, expressed in taste buds (sensory organs of clustered epithelial cells) of the circumvallate and foliate papillae of the tongue at protein level. Expressed in enteroendocrine L cells of the gut. Detected also in spermatozoa.

The protein localises to the cytoplasm. Functionally, guanine nucleotide-binding protein (G protein) alpha subunit playing a prominent role in bitter and sweet taste transduction as well as in umami (monosodium glutamate, monopotassium glutamate, and inosine monophosphate) taste transduction. Transduction by this alpha subunit involves coupling of specific cell-surface receptors with a cGMP-phosphodiesterase; Activation of phosphodiesterase lowers intracellular levels of cAMP and cGMP which may open a cyclic nucleotide-suppressible cation channel leading to influx of calcium, ultimately leading to release of neurotransmitter. Indeed, denatonium and strychnine induce transient reduction in cAMP and cGMP in taste tissue, whereas this decrease is inhibited by GNAT3 antibody. Gustducin heterotrimer transduces response to bitter and sweet compounds via regulation of phosphodiesterase for alpha subunit, as well as via activation of phospholipase C for beta and gamma subunits, with ultimate increase inositol trisphosphate and increase of intracellular Calcium. GNAT3 can functionally couple to taste receptors to transmit intracellular signal: receptor heterodimer TAS1R2/TAS1R3 senses sweetness and TAS1R1/TAS1R3 transduces umami taste, whereas the T2R family GPCRs such as TAS2R14 act as bitter sensors. Also functions as lumenal sugar sensors in the gut to control the expression of the Na+-glucose transporter SGLT1 in response to dietaty sugar, as well as the secretion of Glucagon-like peptide-1, GLP-1 and glucose-dependent insulinotropic polypeptide, GIP. Thus, may modulate the gut capacity to absorb sugars, with implications in malabsorption syndromes and diet-related disorders including diabetes and obesity. The protein is Guanine nucleotide-binding protein G(t) subunit alpha-3 (GNAT3) of Homo sapiens (Human).